Here is a 254-residue protein sequence, read N- to C-terminus: MRKPLVGINMKNYINTRAQTSEWLEATIPLLENFSDVDTFIFPSMGTLETTANLLAGTSFGFGPQNMAPEKSGPLTGEFSVESIIDLNANYVEIGHAERKNLFHEKTSEIAKKIKLALDEKITPVVCVGEEVHANDTNELKNALKKQIEALFQTINLAQWENVVLAYEPEWAIGKASSAETNYIESAHQALREIIRELGGDETLVRIIYGGSVSKENAAEIVRQKNVDGLFVGRFGHKPQNFADIVSIVSKTKG.

9–11 (NMK) provides a ligand contact to substrate. His-96 acts as the Electrophile in catalysis. The active-site Proton acceptor is the Glu-168. Substrate-binding residues include Gly-174 and Ser-212.

This sequence belongs to the triosephosphate isomerase family. As to quaternary structure, homodimer.

The protein resides in the cytoplasm. It carries out the reaction D-glyceraldehyde 3-phosphate = dihydroxyacetone phosphate. The protein operates within polyol metabolism; glycerol degradation. In terms of biological role, involved in the glycerol metabolism. Catalyzes stereospecifically the conversion of dihydroxyacetone phosphate (DHAP) to D-glyceraldehyde-3-phosphate (G3P). This Listeria innocua serovar 6a (strain ATCC BAA-680 / CLIP 11262) protein is Triosephosphate isomerase 2.